The following is a 216-amino-acid chain: UPF0711 protein C18orf21 homolog (216 aa).

Disordered regions lie at residues 118 to 185 (RSFL…ASKT) and 197 to 216 (SQSESKKNPKMDFRNFLSSL). Over residues 124–136 (LKSNPTTPTSKLS) the composition is skewed to polar residues. Phosphoserine is present on serine 126. Phosphothreonine occurs at positions 130 and 139. 2 stretches are compositionally biased toward polar residues: residues 145 to 157 (PSSANLNHTSGSK) and 167 to 182 (TPTSGQSTSICSSKNA). The segment covering 200 to 209 (ESKKNPKMDF) has biased composition (basic and acidic residues).

This sequence belongs to the UPF0711 family.

The sequence is that of UPF0711 protein C18orf21 homolog from Bos taurus (Bovine).